The sequence spans 80 residues: MGSTKTLVTCFLTIILAVSLSNHNVLAIDAGIKGFDTDHCDTRCYGRDECMNYCIKAGFPKGGQCGSLCIPCGFKCCCQK.

An N-terminal signal peptide occupies residues 1 to 27 (MGSTKTLVTCFLTIILAVSLSNHNVLA). 4 disulfides stabilise this stretch: Cys-40–Cys-78, Cys-44–Cys-65, Cys-50–Cys-76, and Cys-54–Cys-77.

It belongs to the DEFL family.

It is found in the secreted. This chain is Defensin-like protein 46, found in Arabidopsis thaliana (Mouse-ear cress).